The primary structure comprises 296 residues: ADP-forming sulfoacetate-CoA ligase subunit SqwL (296 aa).

Residues 17 to 20 (TGSE), lysine 43, and 96 to 98 (IAD) each bind CoA. Catalysis depends on histidine 251, which acts as the Tele-phosphohistidine intermediate.

Belongs to the succinate/malate CoA ligase alpha subunit family. In terms of assembly, forms a complex with SqwK.

It carries out the reaction sulfoacetate + ATP + CoA = sulfoacetyl-CoA + ADP + phosphate. Functionally, part of a variant of the sulfo-TK pathway, a D-sulfoquinovose degradation pathway that produces sulfoacetate. Hydrolyzes sulfoacetyl-coenzyme A (sulfoacetyl-CoA) to produce sulfoacetate and CoA coupled with the phosphorylation of ADP to generate ATP. Cannot use succinate, acetate or 3-hydroxypropionate, and shows only residual activities with malonate and 3-sulfopropanoate. This is ADP-forming sulfoacetate-CoA ligase subunit SqwL from Acholeplasma sp.